Here is a 236-residue protein sequence, read N- to C-terminus: 1-(5-phosphoribosyl)-5-[(5-phosphoribosylamino)methylideneamino] imidazole-4-carboxamide isomerase (236 aa).

Residue Asp-8 is the Proton acceptor of the active site. Asp-129 (proton donor) is an active-site residue.

Belongs to the HisA/HisF family.

It is found in the cytoplasm. The catalysed reaction is 1-(5-phospho-beta-D-ribosyl)-5-[(5-phospho-beta-D-ribosylamino)methylideneamino]imidazole-4-carboxamide = 5-[(5-phospho-1-deoxy-D-ribulos-1-ylimino)methylamino]-1-(5-phospho-beta-D-ribosyl)imidazole-4-carboxamide. Its pathway is amino-acid biosynthesis; L-histidine biosynthesis; L-histidine from 5-phospho-alpha-D-ribose 1-diphosphate: step 4/9. The protein is 1-(5-phosphoribosyl)-5-[(5-phosphoribosylamino)methylideneamino] imidazole-4-carboxamide isomerase of Methanocorpusculum labreanum (strain ATCC 43576 / DSM 4855 / Z).